A 683-amino-acid chain; its full sequence is Probable metal-nicotianamine transporter YSL3 (683 aa).

Helical transmembrane passes span 29-49, 58-78, 97-117, 142-162, 204-224, 265-285, 309-329, 372-392, 404-424, 448-468, 490-510, 553-573, 595-615, and 628-648; these read LVTP…CFVG, IVPA…KWLI, MFLL…GFAT, HVPI…GVLI, VATI…QWFY, IVNF…YPFL, VFIS…TLIT, IPIP…TIAI, LAVL…ATGL, PGAV…LHIS, TGQI…FLAF, CMTF…VVLV, FFAG…LLAW, and SAVA…SALL.

This sequence belongs to the YSL (TC 2.A.67.2) family.

Its subcellular location is the membrane. Functionally, may be involved in the transport of nicotianamine-chelated metals. This Oryza sativa subsp. japonica (Rice) protein is Probable metal-nicotianamine transporter YSL3 (YSL3).